We begin with the raw amino-acid sequence, 919 residues long: MRRSDGHEETSEFLPMTHSRSVSAASQTSTDSSLSTESLFPREQKPFPNAMGGMALADDDKYRDLEDGEAELSEPFLSSSKKAATGGGRARRIFWILVLLCLGGWLLAFVLFLTGGRANYQTASDALQAHGADSALGSTSTSSGKPVTLQQVLGGQWNPRYHAIGWVAGPNNEDGLLVEKGGDEKQGYLRVDDIRSRKGNNTGRESRVLMRKPIVHVDGQAIVPSNVWPSPDLKKVLLISEQQKNWRHSFTGKYWVFDVDSQTAQPLDPSAPDGRVQLALWSPASDAVVFVRDNNLYLRRLSSDSVVAITKDGGENLFYGVPDWVYEEEVISGNSVTWWSNDAKYIAFFRTNETSVPEFPVQYYISRPSGKKPLPGLENYPDVREIKYPKPGAPNPVVDLQFYDVEKNEVFSVQVADDFADDDRIIIEVLWASEGKILVRSTNRESDILKVYLIDTQSRTGKLVRSEDVAGLDGGWVEPSQSTRFVPADPNNGRPHDGYIDTVPYNGYDHLAYFSPLDNPNALMLTSGEWEVVDAPAAVDLQRGLVYFVGTKEAPTQRHVYRVQLDGSNLNPLTDTSKPGYYDVSFSHGTGYALLTYKGPSIPWQAIINTHGDEITYEDRIEDNAQLTKMVEAYALPTEVYQNVTVDGYTLQVVERRPPHFNPAKKYPVLFYLYGGPGSQTVDRKFTVDFQSYVASSLGYIVVTVDGRGTGFIGRKARCIVRGNLGFYEAHDQIATAKMWAAKSYVDETRMAIWGWSFGGFMTLKTLEQDAGRTFQYGMAVAPVTDWRFYDSIYTERYMHTPQHNPNGYDNSTITDMAALSESVRFLVMHGASDDNVHLQNTLVLIDKLDLSNVENYDVQFYPDSDHSIYFHNAHMMVYHRLSDWLVNAFNGEWHLIAKPVPDESMWERMKRSLRLLSP.

Basic and acidic residues predominate over residues 1–10 (MRRSDGHEET). The tract at residues 1-53 (MRRSDGHEETSEFLPMTHSRSVSAASQTSTDSSLSTESLFPREQKPFPNAMGG) is disordered. Over 1–92 (MRRSDGHEET…AATGGGRARR (92 aa)) the chain is Cytoplasmic. Residues 21–38 (SVSAASQTSTDSSLSTES) show a composition bias toward low complexity. A helical; Signal-anchor for type II membrane protein transmembrane segment spans residues 93 to 113 (IFWILVLLCLGGWLLAFVLFL). Topologically, residues 114 to 919 (TGGRANYQTA…MKRSLRLLSP (806 aa)) are vacuolar. N-linked (GlcNAc...) asparagine glycans are attached at residues N200, N352, and N643. S757 serves as the catalytic Charge relay system. N-linked (GlcNAc...) asparagine glycosylation is present at N811. Active-site charge relay system residues include D834 and H867.

This sequence belongs to the peptidase S9B family.

It localises to the vacuole membrane. It catalyses the reaction Release of an N-terminal dipeptide, Xaa-Yaa-|-Zaa-, from a polypeptide, preferentially when Yaa is Pro, provided Zaa is neither Pro nor hydroxyproline.. Its function is as follows. Type IV dipeptidyl-peptidase which removes N-terminal dipeptides sequentially from polypeptides having unsubstituted N-termini provided that the penultimate residue is proline. This Aspergillus fumigatus (strain CBS 144.89 / FGSC A1163 / CEA10) (Neosartorya fumigata) protein is Probable dipeptidyl-aminopeptidase B (dapB).